The primary structure comprises 297 residues: Large ribosomal subunit protein uL18 (297 aa).

At Gly-2 the chain carries N-acetylglycine. Lys-5 and Lys-48 each carry N6-acetyllysine. At Ser-185 the chain carries Phosphoserine. The residue at position 220 (Lys-220) is an N6-acetyllysine; alternate. Lys-220 is covalently cross-linked (Glycyl lysine isopeptide (Lys-Gly) (interchain with G-Cter in SUMO1); alternate). A Glycyl lysine isopeptide (Lys-Gly) (interchain with G-Cter in SUMO2); alternate cross-link involves residue Lys-220. Thr-232 carries the post-translational modification Phosphothreonine. The tract at residues 253 to 297 (YEKKPKKEVKKKRWNRPKMSLAQKKDRVAQKKASFLRAQERAAES) is disordered. Over residues 258–268 (KKEVKKKRWNR) the composition is skewed to basic residues. The residue at position 272 (Ser-272) is a Phosphoserine.

Belongs to the universal ribosomal protein uL18 family. Component of the large ribosomal subunit (LSU). Part of the 5S RNP complex, which is a LSU subcomplex composed of the 5S RNA, RPL5 and RPL11. Component of a hexameric 5S RNP precursor complex, composed of 5S RNA, RRS1, RPF2/BXDC1, RPL5, RPL11 and HEATR3; this complex acts as a precursor for ribosome assembly. Interacts with isoform 1 of NVL in an ATP-dependent manner. Interacts with RRP1B. Interacts with IPO5, IPO7 and KPNB1; these interactions may be involved in RPL5 nuclear import for the assembly of ribosomal subunits.

It is found in the cytoplasm. The protein resides in the nucleus. It localises to the nucleolus. Its function is as follows. Component of the ribosome, a large ribonucleoprotein complex responsible for the synthesis of proteins in the cell. The small ribosomal subunit (SSU) binds messenger RNAs (mRNAs) and translates the encoded message by selecting cognate aminoacyl-transfer RNA (tRNA) molecules. The large subunit (LSU) contains the ribosomal catalytic site termed the peptidyl transferase center (PTC), which catalyzes the formation of peptide bonds, thereby polymerizing the amino acids delivered by tRNAs into a polypeptide chain. The nascent polypeptides leave the ribosome through a tunnel in the LSU and interact with protein factors that function in enzymatic processing, targeting, and the membrane insertion of nascent chains at the exit of the ribosomal tunnel. As part of the 5S RNP/5S ribonucleoprotein particle it is an essential component of the LSU, required for its formation and the maturation of rRNAs. It also couples ribosome biogenesis to p53/TP53 activation. As part of the 5S RNP it accumulates in the nucleoplasm and inhibits MDM2, when ribosome biogenesis is perturbed, mediating the stabilization and the activation of TP53. In Homo sapiens (Human), this protein is Large ribosomal subunit protein uL18 (RPL5).